Here is a 117-residue protein sequence, read N- to C-terminus: Large ribosomal subunit protein bL20 (117 aa).

This sequence belongs to the bacterial ribosomal protein bL20 family.

Its function is as follows. Binds directly to 23S ribosomal RNA and is necessary for the in vitro assembly process of the 50S ribosomal subunit. It is not involved in the protein synthesizing functions of that subunit. This Thermomicrobium roseum (strain ATCC 27502 / DSM 5159 / P-2) protein is Large ribosomal subunit protein bL20.